Here is a 274-residue protein sequence, read N- to C-terminus: Imidazole glycerol phosphate synthase subunit HisF (274 aa).

Residues Asp-11 and Asp-134 contribute to the active site.

The protein belongs to the HisA/HisF family. In terms of assembly, heterodimer of HisH and HisF.

The protein resides in the cytoplasm. The enzyme catalyses 5-[(5-phospho-1-deoxy-D-ribulos-1-ylimino)methylamino]-1-(5-phospho-beta-D-ribosyl)imidazole-4-carboxamide + L-glutamine = D-erythro-1-(imidazol-4-yl)glycerol 3-phosphate + 5-amino-1-(5-phospho-beta-D-ribosyl)imidazole-4-carboxamide + L-glutamate + H(+). It participates in amino-acid biosynthesis; L-histidine biosynthesis; L-histidine from 5-phospho-alpha-D-ribose 1-diphosphate: step 5/9. Its function is as follows. IGPS catalyzes the conversion of PRFAR and glutamine to IGP, AICAR and glutamate. The HisF subunit catalyzes the cyclization activity that produces IGP and AICAR from PRFAR using the ammonia provided by the HisH subunit. The chain is Imidazole glycerol phosphate synthase subunit HisF from Methanobrevibacter smithii (strain ATCC 35061 / DSM 861 / OCM 144 / PS).